Consider the following 196-residue polypeptide: MNDRHPPSVSTHRHATRMDDRSLIRQTIRTVPDWPSPGVQFRDITPLLQSPKVFRVLIDQFVHRYFDLRPDAIAGLDARGFIIGSVLAYELNIGFVPIRKKGKLPYTTVEESYELEYGSAAVEIHTDAVKAGDRVLLIDDLIATGGTMMAGKRLLERLGATVIEGAAIVDLPELGGAAKLRAAGLPLFTLVSFEGH.

Belongs to the purine/pyrimidine phosphoribosyltransferase family. Homodimer.

The protein localises to the cytoplasm. The catalysed reaction is AMP + diphosphate = 5-phospho-alpha-D-ribose 1-diphosphate + adenine. Its pathway is purine metabolism; AMP biosynthesis via salvage pathway; AMP from adenine: step 1/1. Catalyzes a salvage reaction resulting in the formation of AMP, that is energically less costly than de novo synthesis. This is Adenine phosphoribosyltransferase from Methylibium petroleiphilum (strain ATCC BAA-1232 / LMG 22953 / PM1).